A 57-amino-acid polypeptide reads, in one-letter code: UPF0391 membrane protein RPD_3366 (57 aa).

2 consecutive transmembrane segments (helical) span residues 4-24 (WVVTFLVVALIAGILGFGGIA) and 30-50 (IAKVIFFIAVVLFLISAVVGL).

This sequence belongs to the UPF0391 family.

The protein localises to the cell membrane. In Rhodopseudomonas palustris (strain BisB5), this protein is UPF0391 membrane protein RPD_3366.